The following is a 75-amino-acid chain: uncharacterized protein (75 aa).

This is an uncharacterized protein from Saccharolobus islandicus (Sulfolobus islandicus).